The following is a 160-amino-acid chain: MAINEPEFATAVAVATKKRTFKKFSFRGFNVDALLKMSNVDLAKLFNARVRRRFYRGLKKQPLILIKKLRRAKKEASDENKMKPEVVKTHLRNMIIVPEMIGSVVGVHNGKKFNEIVIKPEMIGHYLAEFSMTCKKVNHHRPRICGCCCFRRSTRFIPLR.

This sequence belongs to the universal ribosomal protein uS19 family.

Its subcellular location is the cytoplasm. The chain is Small ribosomal subunit protein uS19v (RPS15F) from Arabidopsis thaliana (Mouse-ear cress).